The following is a 155-amino-acid chain: 2-C-methyl-D-erythritol 2,4-cyclodiphosphate synthase (155 aa).

Positions 9 and 11 each coordinate a divalent metal cation. 4-CDP-2-C-methyl-D-erythritol 2-phosphate is bound by residues 9–11 (DSH) and 35–36 (HS). His-43 is a binding site for a divalent metal cation. 57–59 (DIG) serves as a coordination point for 4-CDP-2-C-methyl-D-erythritol 2-phosphate.

The protein belongs to the IspF family. In terms of assembly, homotrimer. The cofactor is a divalent metal cation.

It carries out the reaction 4-CDP-2-C-methyl-D-erythritol 2-phosphate = 2-C-methyl-D-erythritol 2,4-cyclic diphosphate + CMP. The protein operates within isoprenoid biosynthesis; isopentenyl diphosphate biosynthesis via DXP pathway; isopentenyl diphosphate from 1-deoxy-D-xylulose 5-phosphate: step 4/6. Functionally, involved in the biosynthesis of isopentenyl diphosphate (IPP) and dimethylallyl diphosphate (DMAPP), two major building blocks of isoprenoid compounds. Catalyzes the conversion of 4-diphosphocytidyl-2-C-methyl-D-erythritol 2-phosphate (CDP-ME2P) to 2-C-methyl-D-erythritol 2,4-cyclodiphosphate (ME-CPP) with a corresponding release of cytidine 5-monophosphate (CMP). In Koribacter versatilis (strain Ellin345), this protein is 2-C-methyl-D-erythritol 2,4-cyclodiphosphate synthase.